The primary structure comprises 392 residues: MTAVEGSSLTALNKGRLFASFDVDAFEVPGGRDEIWRFTPLRRLRGLHDGSAVANGKVHIRVSQQSGVQTEIVGRGDGRLGQGGIPTDRVAAQAFSSFQSATVVTVGRDMQIATPINIAVTGPDKGAVVYGHLQIRVCKFGEAVVVIDHRGSGTYADNVEFIVEAAARLTVVWIADWADDMVHLSAHHALLGKDAVLRHITVTLGGEVVRVSANVRFSGPGGDAELLGLYFADDGQHLESRLLVDHAHPDCKSNVLYKGALQGDPVSSRPDAHTVWVGDVLIHPEATGTDTFEVNRNLVLTNGVRADSVPNLEIETDEIVGAGHASATGRFDDEQLFYLRSRGIGEEQARRLLVRGFFGEIISKIAVPQVRERLIAAIEHELTITESRSTAS.

The protein belongs to the iron-sulfur cluster assembly SufBD family.

The protein is Iron-sulfur cluster assembly SufBD family protein ML0594 of Mycobacterium leprae (strain TN).